We begin with the raw amino-acid sequence, 292 residues long: tRNA pseudouridine synthase B (292 aa).

The active-site Nucleophile is the Asp-38.

Belongs to the pseudouridine synthase TruB family. Type 1 subfamily.

The enzyme catalyses uridine(55) in tRNA = pseudouridine(55) in tRNA. In terms of biological role, responsible for synthesis of pseudouridine from uracil-55 in the psi GC loop of transfer RNAs. In Gloeobacter violaceus (strain ATCC 29082 / PCC 7421), this protein is tRNA pseudouridine synthase B.